We begin with the raw amino-acid sequence, 136 residues long: Basic phospholipase A2 Tgc-K49 (136 aa).

Residues 1-15 (MRTLWIVAVLLVGEG) form the signal peptide. Cystine bridges form between Cys41/Cys130, Cys43/Cys59, Cys58/Cys110, Cys64/Cys136, Cys65/Cys103, Cys72/Cys96, and Cys90/Cys101. The active site involves His62. Asp104 is a catalytic residue.

Belongs to the phospholipase A2 family. Group II subfamily. K49 sub-subfamily. In terms of tissue distribution, expressed by the venom gland.

Its subcellular location is the secreted. The enzyme catalyses a 1,2-diacyl-sn-glycero-3-phosphocholine + H2O = a 1-acyl-sn-glycero-3-phosphocholine + a fatty acid + H(+). In terms of biological role, PLA2 catalyzes the calcium-dependent hydrolysis of the 2-acyl groups in 3-sn-phosphoglycerides. This Trimeresurus gracilis (Kikuchi habu) protein is Basic phospholipase A2 Tgc-K49.